Here is a 237-residue protein sequence, read N- to C-terminus: Ribonuclease PH (237 aa).

Phosphate-binding positions include arginine 86 and 124 to 126; that span reads GTR.

This sequence belongs to the RNase PH family. Homohexameric ring arranged as a trimer of dimers.

The catalysed reaction is tRNA(n+1) + phosphate = tRNA(n) + a ribonucleoside 5'-diphosphate. Its function is as follows. Phosphorolytic 3'-5' exoribonuclease that plays an important role in tRNA 3'-end maturation. Removes nucleotide residues following the 3'-CCA terminus of tRNAs; can also add nucleotides to the ends of RNA molecules by using nucleoside diphosphates as substrates, but this may not be physiologically important. Probably plays a role in initiation of 16S rRNA degradation (leading to ribosome degradation) during starvation. This is Ribonuclease PH from Coxiella burnetii (strain RSA 331 / Henzerling II).